The sequence spans 701 residues: MMIPSGECTYAGRKRRKPIQKRRLTMGAEKSNPSKRHRDRLNTELDHLASLLPFSPDIISKLDKLSVLRLSVSYLRVKSFFQALQETCVWSAPALSPEEHSYRGFPVQEGRLLLESLNGFALVVSAEGMIFYASATIVDYLGFHQTDVMHQNIYDYIHVDDRQDFCRQLHWAMDPPQVVFGQSPHADTDNTVLGKLLRAQEGGKGLPSEYSAFLTRCFICRVRCLLDSTSGFLTMQFQGKLKFLFGQKKKTPSGTALPPRLSLFCIVAPVLPSVTEMKMKSTFLKAKHRADIVVTMDSRAKAVTSLCESELHPKLNYLAGKSNGENGISLFRGQTDRSHWARALARSSCLCLRGGPDLLDPKGTSGDREEEDQKHILRRSPGAWGQREMHKYSYGLETPVHLRHLNWSTEQRSQESTTKLTRQPSKNEPSTCLVPHGSCVPYPGSQGMLSASNMASFRDSLDHPTGAYCSQMNRPLSDIHQGQVDPSTCHISQGSLGSRIPLTGMQRFTARGFSTEDAKLPSLPVTIGTPCNPVLSLDVPIKMENESGSQDIVEASTTSCLWLGTSDMARGHLVGFPARMHLKTEPDYRQQACTPHLGHGMLGTNPYSRDTVGSCREHAPLYSAHCTCLDPEPPHHLFMCSHSESQHPSLDQDCRAPIVKREPLDSPSWAAPGQVTVPRMFPKSASKTVIPSKGSDGIFLP.

The bHLH domain occupies 25-78 (TMGAEKSNPSKRHRDRLNTELDHLASLLPFSPDIISKLDKLSVLRLSVSYLRVK). The region spanning 106 to 176 (PVQEGRLLLE…RQLHWAMDPP (71 aa)) is the PAS domain. Polar residues predominate over residues 409–430 (TEQRSQESTTKLTRQPSKNEPS). A disordered region spans residues 409–432 (TEQRSQESTTKLTRQPSKNEPSTC). The needed for transcriptional repression stretch occupies residues 555-701 (ASTTSCLWLG…SKGSDGIFLP (147 aa)). Glycyl lysine isopeptide (Lys-Gly) (interchain with G-Cter in SUMO2) cross-links involve residues Lys-583 and Lys-660.

Interacts with ARNT, ANKRA2, HDAC4 and HDAC5. Interacts with ARNT; forms a heterodimer with ARNT.

It is found in the cytoplasm. It localises to the nucleus. Mediates dioxin toxicity and is involved in regulation of cell growth and differentiation. Represses the transcription activity of AHR by competing with this transcription factor for heterodimer formation with the ARNT and subsequently binding to the xenobiotic response element (XRE) sequence present in the promoter regulatory region of variety of genes. Represses CYP1A1 by binding the XRE sequence and recruiting ANKRA2, HDAC4 and/or HDAC5. Autoregulates its expression by associating with its own XRE site. The polypeptide is Aryl hydrocarbon receptor repressor (Ahrr) (Mus musculus (Mouse)).